Consider the following 369-residue polypeptide: S-adenosylmethionine:tRNA ribosyltransferase-isomerase (369 aa).

It belongs to the QueA family. In terms of assembly, monomer.

It localises to the cytoplasm. The enzyme catalyses 7-aminomethyl-7-carbaguanosine(34) in tRNA + S-adenosyl-L-methionine = epoxyqueuosine(34) in tRNA + adenine + L-methionine + 2 H(+). Its pathway is tRNA modification; tRNA-queuosine biosynthesis. Its function is as follows. Transfers and isomerizes the ribose moiety from AdoMet to the 7-aminomethyl group of 7-deazaguanine (preQ1-tRNA) to give epoxyqueuosine (oQ-tRNA). This chain is S-adenosylmethionine:tRNA ribosyltransferase-isomerase, found in Synechococcus sp. (strain CC9311).